Consider the following 291-residue polypeptide: Shikimate dehydrogenase (NADP(+)) (291 aa).

Shikimate-binding positions include 14–16 and T61; that span reads SKS. K65 (proton acceptor) is an active-site residue. An NADP(+)-binding site is contributed by E77. N86 and D102 together coordinate shikimate. Residues 139–143, 164–169, and L232 contribute to the NADP(+) site; these read GAGGA and NRTFSR. Y234 contacts shikimate. G256 lines the NADP(+) pocket.

The protein belongs to the shikimate dehydrogenase family. Homodimer.

It carries out the reaction shikimate + NADP(+) = 3-dehydroshikimate + NADPH + H(+). The protein operates within metabolic intermediate biosynthesis; chorismate biosynthesis; chorismate from D-erythrose 4-phosphate and phosphoenolpyruvate: step 4/7. Involved in the biosynthesis of the chorismate, which leads to the biosynthesis of aromatic amino acids. Catalyzes the reversible NADPH linked reduction of 3-dehydroshikimate (DHSA) to yield shikimate (SA). In Blochmanniella pennsylvanica (strain BPEN), this protein is Shikimate dehydrogenase (NADP(+)).